We begin with the raw amino-acid sequence, 154 residues long: Protein X (154 aa).

Positions 28–48 are disordered; the sequence is RTLPGSLGAVPPPSSSAVPAD. The span at 30–46 shows a compositional bias: low complexity; it reads LPGSLGAVPPPSSSAVP. The tract at residues 68–117 is mitochondrial targeting sequence; that stretch reads PCALRFTSARRMETTVNAPWSLPTVLHKRTLGLSGRSMTWIEDYIKDCVF.

The protein belongs to the orthohepadnavirus protein X family. May form homodimer. May interact with host CEBPA, CFLAR, CREB1, DDB1, E4F1, HBXIP, HSPD1/HSP60, NFKBIA, POLR2E and SMAD4. Interacts with host SMC5-SMC6 complex and induces its degradation. Interacts with host TRPC4AP; leading to prevent ubiquitination of TRPC4AP. Interacts with host PLSCR1; this interaction promotes ubiquitination and degradation of HBx and impairs HBx-mediated cell proliferation. A fraction may be phosphorylated in insect cells and HepG2 cells, a human hepatoblastoma cell line. Phosphorylated in vitro by host protein kinase C or mitogen-activated protein kinase. N-acetylated in insect cells.

The protein resides in the host cytoplasm. Its subcellular location is the host nucleus. It localises to the host mitochondrion. In terms of biological role, multifunctional protein that plays a role in silencing host antiviral defenses and promoting viral transcription. Does not seem to be essential for HBV infection. May be directly involved in development of cirrhosis and liver cancer (hepatocellular carcinoma). Most of cytosolic activities involve modulation of cytosolic calcium. The effect on apoptosis is controversial depending on the cell types in which the studies have been conducted. May induce apoptosis by localizing in mitochondria and causing loss of mitochondrial membrane potential. May also modulate apoptosis by binding host CFLAR, a key regulator of the death-inducing signaling complex (DISC). Promotes viral transcription by using the host E3 ubiquitin ligase DDB1 to target the SMC5-SMC6 complex to proteasomal degradation. This host complex would otherwise bind to viral episomal DNA, and prevents its transcription. Moderately stimulates transcription of many different viral and cellular transcription elements. Promoters and enhancers stimulated by HBx contain DNA binding sites for NF-kappa-B, AP-1, AP-2, c-EBP, ATF/CREB, or the calcium-activated factor NF-AT. The protein is Protein X of Homo sapiens (Human).